We begin with the raw amino-acid sequence, 542 residues long: Probable serine/threonine-protein kinase ndrB (542 aa).

The segment at 1-52 (MNVERKLESLSLQQQQQEEQQDESEQPNQGVEDEEEEEYDEEEYEEEEEDIN) is disordered. Residues 9 to 18 (SLSLQQQQQE) show a composition bias toward low complexity. The segment covering 19–51 (EQQDESEQPNQGVEDEEEEEYDEEEYEEEEEDI) has biased composition (acidic residues). A Protein kinase domain is found at 130–437 (FESIRIIGRG…VEEIQSHPFF (308 aa)). Residues 136–144 (IGRGAFGEV) and K159 contribute to the ATP site. D258 (proton acceptor) is an active-site residue. An AGC-kinase C-terminal domain is found at 438 to 510 (KGVDWRRLRE…RNFDAMRDAF (73 aa)). The disordered stretch occupies residues 452-486 (IIPQLSSPTDTSNFDHYEEEQQPEPMQPVQSKSRR). The span at 455–465 (QLSSPTDTSNF) shows a compositional bias: polar residues.

This sequence belongs to the protein kinase superfamily. AGC Ser/Thr protein kinase family.

It localises to the cytoplasm. It catalyses the reaction L-seryl-[protein] + ATP = O-phospho-L-seryl-[protein] + ADP + H(+). It carries out the reaction L-threonyl-[protein] + ATP = O-phospho-L-threonyl-[protein] + ADP + H(+). The polypeptide is Probable serine/threonine-protein kinase ndrB (ndrB) (Dictyostelium discoideum (Social amoeba)).